The following is a 144-amino-acid chain: Maximins 3/H2 (144 aa).

An N-terminal signal peptide occupies residues 1–18 (MNFKYIVAVSFLIASAYA). 2 consecutive propeptides follow at residues 19–43 (RSVQNDEQSLSQRDVLEEESLREIR) and 74–123 (TAEE…KEKR). Isoleucine 143 carries the post-translational modification Isoleucine amide.

This sequence belongs to the bombinin family. As to expression, expressed by the skin glands.

The protein localises to the secreted. Maximin-3 shows antibacterial activity against both Gram-positive and Gram-negative bacteria. It also shows antimicrobial activity against the fungus C.albicans, but not against A.flavus nor P.uticale. It has little hemolytic activity. It possess a significant cytotoxicity against tumor cell lines. It possess a significant anti-HIV activity. It shows high spermicidal activity. Functionally, maximin-H2 shows antibacterial activity against both Gram-positive and Gram-negative bacteria. It also shows antimicrobial activity against the fungus C.albicans. Shows strong hemolytic activity. This is Maximins 3/H2 from Bombina maxima (Giant fire-bellied toad).